Reading from the N-terminus, the 462-residue chain is Sonic hedgehog protein (462 aa).

Positions 1-23 (MLLLARCLLLVLVSSLLVCSGLA) are cleaved as a signal peptide. Cysteine 24 carries N-palmitoyl cysteine lipidation. The short motif at 32 to 38 (KRRHPKK) is the Cardin-Weintraub element. Residues glutamate 89, glutamate 90, aspartate 95, threonine 125, glutamate 126, aspartate 129, and aspartate 131 each coordinate Ca(2+). 3 residues coordinate Zn(2+): histidine 140, aspartate 147, and histidine 182. Glycine 197 carries the Cholesterol glycine ester lipid modification. Residue asparagine 278 is glycosylated (N-linked (GlcNAc...) asparagine). Disordered regions lie at residues 279–302 (DSATGEPEASSGSGPPSGGALGPR) and 395–414 (TDRGGDSGGGDRGGGGGRVA). The segment covering 283–292 (GEPEASSGSG) has biased composition (low complexity). A compositionally biased stretch (gly residues) spans 400–412 (DSGGGDRGGGGGR).

This sequence belongs to the hedgehog family. Multimer. As to quaternary structure, interacts with HHATL/GUP1 which negatively regulates HHAT-mediated palmitoylation of the SHH N-terminus. Interacts with BOC and CDON. Interacts with HHIP. Interacts with DISP1 via its cholesterol anchor. Interacts with SCUBE2. Interacts with glypican GPC3. In terms of processing, the C-terminal domain displays an autoproteolysis activity and a cholesterol transferase activity. Both activities result in the cleavage of the full-length protein and covalent attachment of a cholesterol moiety to the C-terminal of the newly generated N-terminal fragment (ShhN). Cholesterylation is required for the sonic hedgehog protein N-product targeting to lipid rafts and multimerization. ShhN is the active species in both local and long-range signaling, whereas the C-product (ShhC) is degraded in the endoplasmic reticulum. Post-translationally, N-palmitoylation by HHAT of ShhN is required for sonic hedgehog protein N-product multimerization and full activity. It is a prerequisite for the membrane-proximal positioning and the subsequent shedding of this N-terminal peptide. The lipidated N- and C-terminal peptides of ShhNp can be cleaved (shedding). The N-terminal palmitoylated peptide is cleaved at the Cardin-Weintraub (CW) motif site. The cleavage reduced the interactions with heparan sulfate. The cleavage is enhanced by SCUBE2.

The protein localises to the endoplasmic reticulum membrane. Its subcellular location is the golgi apparatus membrane. It is found in the secreted. It localises to the cell membrane. The catalysed reaction is glycyl-L-cysteinyl-[protein] + cholesterol + H(+) = [protein]-C-terminal glycyl cholesterol ester + N-terminal L-cysteinyl-[protein]. In terms of biological role, the C-terminal part of the sonic hedgehog protein precursor displays an autoproteolysis and a cholesterol transferase activity. Both activities result in the cleavage of the full-length protein into two parts (ShhN and ShhC) followed by the covalent attachment of a cholesterol moiety to the C-terminal of the newly generated ShhN. Both activities occur in the endoplasmic reticulum. Once cleaved, ShhC is degraded in the endoplasmic reticulum. Its function is as follows. The dually lipidated sonic hedgehog protein N-product (ShhNp) is a morphogen which is essential for a variety of patterning events during development. Induces ventral cell fate in the neural tube and somites. Involved in the patterning of the anterior-posterior axis of the developing limb bud. Essential for axon guidance. Binds to the patched (PTCH1) receptor, which functions in association with smoothened (SMO), to activate the transcription of target genes. In the absence of SHH, PTCH1 represses the constitutive signaling activity of SMO. This chain is Sonic hedgehog protein, found in Homo sapiens (Human).